The sequence spans 107 residues: UPF0122 protein STH1464 (107 aa).

The protein belongs to the UPF0122 family.

Functionally, might take part in the signal recognition particle (SRP) pathway. This is inferred from the conservation of its genetic proximity to ftsY/ffh. May be a regulatory protein. The sequence is that of UPF0122 protein STH1464 from Symbiobacterium thermophilum (strain DSM 24528 / JCM 14929 / IAM 14863 / T).